The chain runs to 73 residues: Heterin-2 (73 aa).

Positions 1–22 (MQYKTFLVIFLAYLLVTEEALA) are cleaved as a signal peptide. The propeptide occupies 47 to 73 (KRALKNIFDPYQKNLDLELERLLSQLQ).

Belongs to the non-disulfide-bridged peptide (NDBP) superfamily. Medium-length antimicrobial peptide (group 3) family. Expressed by the venom gland.

The protein resides in the secreted. Its subcellular location is the target cell membrane. Amphipathic peptide with potent activities against Gram-positive bacteria (MIC=5.6-30.0 uM) and weaker activities against the tested Gram-negative bacteria (MIC=15 uM to &gt;45 uM). It has high hemolytic activity against human erythrocytes. May act by disrupting the integrity of the bacterial cell membrane. The sequence is that of Heterin-2 from Heterometrus spinifer (Asia giant forest scorpion).